A 266-amino-acid polypeptide reads, in one-letter code: 4-hydroxy-tetrahydrodipicolinate reductase (266 aa).

NAD(+)-binding positions include 7–12 (GTIGRM), Glu-33, 96–98 (GTT), and 120–123 (APNM). The Proton donor/acceptor role is filled by His-153. His-154 is a binding site for (S)-2,3,4,5-tetrahydrodipicolinate. Lys-157 acts as the Proton donor in catalysis. Residue 163–164 (GT) coordinates (S)-2,3,4,5-tetrahydrodipicolinate.

This sequence belongs to the DapB family.

Its subcellular location is the cytoplasm. It catalyses the reaction (S)-2,3,4,5-tetrahydrodipicolinate + NAD(+) + H2O = (2S,4S)-4-hydroxy-2,3,4,5-tetrahydrodipicolinate + NADH + H(+). The enzyme catalyses (S)-2,3,4,5-tetrahydrodipicolinate + NADP(+) + H2O = (2S,4S)-4-hydroxy-2,3,4,5-tetrahydrodipicolinate + NADPH + H(+). The protein operates within amino-acid biosynthesis; L-lysine biosynthesis via DAP pathway; (S)-tetrahydrodipicolinate from L-aspartate: step 4/4. Catalyzes the conversion of 4-hydroxy-tetrahydrodipicolinate (HTPA) to tetrahydrodipicolinate. This chain is 4-hydroxy-tetrahydrodipicolinate reductase, found in Polynucleobacter necessarius subsp. necessarius (strain STIR1).